Consider the following 46-residue polypeptide: Phospholipase A2 superbin c (46 aa).

The Ca(2+) site is built by Tyr-28, Gly-30, and Gly-32. A disulfide bridge links Cys-29 with Cys-45.

It depends on Ca(2+) as a cofactor. As to expression, expressed by the venom gland.

It is found in the secreted. It carries out the reaction a 1,2-diacyl-sn-glycero-3-phosphocholine + H2O = a 1-acyl-sn-glycero-3-phosphocholine + a fatty acid + H(+). Its function is as follows. Snake venom phospholipase A2 (PLA2) that inhibits collagen-induced platelet aggregation. In terms of inhibition of platelet aggregation, superbin c is more potent as superbin d. PLA2 catalyzes the calcium-dependent hydrolysis of the 2-acyl groups in 3-sn-phosphoglycerides. The protein is Phospholipase A2 superbin c of Austrelaps superbus (Lowland copperhead snake).